A 369-amino-acid chain; its full sequence is 3-dehydroquinate synthase (369 aa).

Residues 70 to 75 (DAEDGK), 104 to 108 (GAATD), 128 to 129 (TT), Lys141, Lys150, and 168 to 171 (TLET) each bind NAD(+). 3 residues coordinate Zn(2+): Glu183, His246, and His262.

Belongs to the sugar phosphate cyclases superfamily. Dehydroquinate synthase family. It depends on Co(2+) as a cofactor. Zn(2+) serves as cofactor. The cofactor is NAD(+).

Its subcellular location is the cytoplasm. The enzyme catalyses 7-phospho-2-dehydro-3-deoxy-D-arabino-heptonate = 3-dehydroquinate + phosphate. It participates in metabolic intermediate biosynthesis; chorismate biosynthesis; chorismate from D-erythrose 4-phosphate and phosphoenolpyruvate: step 2/7. Its function is as follows. Catalyzes the conversion of 3-deoxy-D-arabino-heptulosonate 7-phosphate (DAHP) to dehydroquinate (DHQ). This chain is 3-dehydroquinate synthase, found in Rhodococcus erythropolis (strain PR4 / NBRC 100887).